A 93-amino-acid chain; its full sequence is uncharacterized protein (93 aa).

Positions 1–76 constitute a Sm domain; sequence MDSHTTEKRR…IQTIEPDESM (76 aa).

As to quaternary structure, part of the core SMN complex at least composed of smn1, yip11/gem2, gem6, gem7 and gem8. Interacts with gem7; the interaction is direct.

The SMN complex catalyzes the assembly of small nuclear ribonucleoproteins (snRNPs), the building blocks of the spliceosome, and thereby plays an important role in the splicing of cellular pre-mRNAs. Most spliceosomal snRNPs contain a common set of Sm proteins smb1, smd1, smd2, smd3, sme1, smf1 and smg1 that assemble in a heptameric protein ring on the Sm site of the small nuclear RNA to form the core snRNP (Sm core). In the cytosol, the Sm proteins smd1, smd2, sme1, smf1 and smg1 (5Sm) are trapped in an inactive 6S pICln-Sm complex by the chaperone saf5. To complete assembly of core snRNPs, the SMN complex accepts 5Sm from saf5. Binding of snRNA inside 5Sm triggers eviction of the SMN complex, thereby allowing binding of smd3 and smb1 to complete assembly of the core snRNP. This is an uncharacterized protein from Schizosaccharomyces pombe (strain 972 / ATCC 24843) (Fission yeast).